The chain runs to 205 residues: Ribosome maturation factor RimP (205 aa).

Positions 1 to 12 are enriched in polar residues; sequence MSNAEAQASSDH. 2 disordered regions span residues 1–24 and 186–205; these read MSNA…APAH and FSHL…SEEA.

This sequence belongs to the RimP family.

Its subcellular location is the cytoplasm. Its function is as follows. Required for maturation of 30S ribosomal subunits. The chain is Ribosome maturation factor RimP from Pseudarthrobacter chlorophenolicus (strain ATCC 700700 / DSM 12829 / CIP 107037 / JCM 12360 / KCTC 9906 / NCIMB 13794 / A6) (Arthrobacter chlorophenolicus).